Consider the following 114-residue polypeptide: Ribosome-binding factor A (114 aa).

This sequence belongs to the RbfA family. As to quaternary structure, monomer. Binds 30S ribosomal subunits, but not 50S ribosomal subunits or 70S ribosomes.

It is found in the cytoplasm. One of several proteins that assist in the late maturation steps of the functional core of the 30S ribosomal subunit. Associates with free 30S ribosomal subunits (but not with 30S subunits that are part of 70S ribosomes or polysomes). Required for efficient processing of 16S rRNA. May interact with the 5'-terminal helix region of 16S rRNA. The protein is Ribosome-binding factor A of Listeria innocua serovar 6a (strain ATCC BAA-680 / CLIP 11262).